The sequence spans 330 residues: Inositol 2-dehydrogenase (330 aa).

The protein belongs to the Gfo/Idh/MocA family.

The catalysed reaction is myo-inositol + NAD(+) = scyllo-inosose + NADH + H(+). It participates in polyol metabolism; myo-inositol degradation into acetyl-CoA; acetyl-CoA from myo-inositol: step 1/7. Functionally, involved in the oxidation of myo-inositol (MI) to 2-keto-myo-inositol (2KMI or 2-inosose). This chain is Inositol 2-dehydrogenase (idhA), found in Rhizobium meliloti (strain 1021) (Ensifer meliloti).